The primary structure comprises 397 residues: CCA-adding enzyme (397 aa).

ATP is bound by residues G27 and R30. CTP is bound by residues G27 and R30. 2 residues coordinate Mg(2+): D40 and D42. 5 residues coordinate ATP: R111, D154, R157, R160, and R163. Residues R111, D154, R157, R160, and R163 each contribute to the CTP site.

Belongs to the tRNA nucleotidyltransferase/poly(A) polymerase family. Bacterial CCA-adding enzyme type 3 subfamily. Homodimer. Mg(2+) serves as cofactor.

It carries out the reaction a tRNA precursor + 2 CTP + ATP = a tRNA with a 3' CCA end + 3 diphosphate. The catalysed reaction is a tRNA with a 3' CCA end + 2 CTP + ATP = a tRNA with a 3' CCACCA end + 3 diphosphate. Functionally, catalyzes the addition and repair of the essential 3'-terminal CCA sequence in tRNAs without using a nucleic acid template. Adds these three nucleotides in the order of C, C, and A to the tRNA nucleotide-73, using CTP and ATP as substrates and producing inorganic pyrophosphate. tRNA 3'-terminal CCA addition is required both for tRNA processing and repair. Also involved in tRNA surveillance by mediating tandem CCA addition to generate a CCACCA at the 3' terminus of unstable tRNAs. While stable tRNAs receive only 3'-terminal CCA, unstable tRNAs are marked with CCACCA and rapidly degraded. This is CCA-adding enzyme from Bacillus licheniformis (strain ATCC 14580 / DSM 13 / JCM 2505 / CCUG 7422 / NBRC 12200 / NCIMB 9375 / NCTC 10341 / NRRL NRS-1264 / Gibson 46).